A 307-amino-acid polypeptide reads, in one-letter code: Homoserine kinase (307 aa).

Residue 86-96 (PIARGLGSSAA) participates in ATP binding.

Belongs to the GHMP kinase family. Homoserine kinase subfamily.

Its subcellular location is the cytoplasm. It catalyses the reaction L-homoserine + ATP = O-phospho-L-homoserine + ADP + H(+). Its pathway is amino-acid biosynthesis; L-threonine biosynthesis; L-threonine from L-aspartate: step 4/5. In terms of biological role, catalyzes the ATP-dependent phosphorylation of L-homoserine to L-homoserine phosphate. The polypeptide is Homoserine kinase (Petrotoga mobilis (strain DSM 10674 / SJ95)).